The sequence spans 118 residues: Large ribosomal subunit protein bL20 (118 aa).

This sequence belongs to the bacterial ribosomal protein bL20 family.

Binds directly to 23S ribosomal RNA and is necessary for the in vitro assembly process of the 50S ribosomal subunit. It is not involved in the protein synthesizing functions of that subunit. This is Large ribosomal subunit protein bL20 from Elusimicrobium minutum (strain Pei191).